The following is a 90-amino-acid chain: DNA-binding protein HU-alpha (90 aa).

Belongs to the bacterial histone-like protein family. Heterodimer of an alpha and a beta chain.

Functionally, histone-like DNA-binding protein which is capable of wrapping DNA to stabilize it, and thus to prevent its denaturation under extreme environmental conditions. The sequence is that of DNA-binding protein HU-alpha (hupA) from Vibrio cholerae serotype O1 (strain ATCC 39315 / El Tor Inaba N16961).